Here is a 130-residue protein sequence, read N- to C-terminus: Small ribosomal subunit protein uS9 (130 aa).

The interval 109-130 (RAKERKKYGLKAARRAPQFSKR) is disordered. The span at 111–130 (KERKKYGLKAARRAPQFSKR) shows a compositional bias: basic residues.

The protein belongs to the universal ribosomal protein uS9 family.

This chain is Small ribosomal subunit protein uS9, found in Heliobacterium modesticaldum (strain ATCC 51547 / Ice1).